Reading from the N-terminus, the 570-residue chain is MRWSRYFLYTEKEEPKEAEAPSHRLLLKAGFIKQVSAGIYELLPPAYKVLKKVESIIRKEMDRSGAQELLLTVLNPKELWEETGRWETYGEELFKLKDRNGREYCLGPTHEEEITDLVRRVVRSYRQLPVILYQIQVKFRDEKRPRFGLIRAREFIMKDAYSFDTDDMSAMISYEAMKFAYQRIFNKLRLNVIMAEADVGQIGGKMSHEFIAFTDYGEAKVAYCENCGYAANAEIVPLPKPEEEKEEEKPMEKVHTPNVHTIEELSKFLDVHPSKIMKAVLYIVNEKEPVLVLIRGDREIDENKLEKVLGTDNFRLATDEEVQELLGTKKGFIGIFNLPENIKVLWDNSLYGVKNLVVALNEPDWHYINVNPGRDFQYGEFVDVAEVREGDPCPKCGSPLKVRRGLELGHIFLLGTRYSEPMKAYFTDRDGKEKPIIMGCYGIGVSRILAALVEQYHDDKGIKWPTPVAPFELDIILLNTKDEEMKNVAEKLYLEAEEKGIDVIFDDREESPGFKFADADLVGFPYRIVVGKKVKEGKVEVQSRHTGEKWDVEIEKAIDFVKEKIEEDKK.

The protein belongs to the class-II aminoacyl-tRNA synthetase family. ProS type 1 subfamily. In terms of assembly, homodimer.

The protein resides in the cytoplasm. The enzyme catalyses tRNA(Pro) + L-proline + ATP = L-prolyl-tRNA(Pro) + AMP + diphosphate. Functionally, catalyzes the attachment of proline to tRNA(Pro) in a two-step reaction: proline is first activated by ATP to form Pro-AMP and then transferred to the acceptor end of tRNA(Pro). As ProRS can inadvertently accommodate and process non-cognate amino acids such as alanine and cysteine, to avoid such errors it has two additional distinct editing activities against alanine. One activity is designated as 'pretransfer' editing and involves the tRNA(Pro)-independent hydrolysis of activated Ala-AMP. The other activity is designated 'posttransfer' editing and involves deacylation of mischarged Ala-tRNA(Pro). The misacylated Cys-tRNA(Pro) is not edited by ProRS. The protein is Proline--tRNA ligase (proS) of Aquifex aeolicus (strain VF5).